We begin with the raw amino-acid sequence, 350 residues long: MNPRGLFQDFNPSKFLIYACLLLFSVLLPLRLDGIIQWSYWAVFAPIWLWKLLVIVGASVGAGVWARNPRYRTEGEACVEFKAMLIAVGIHLLLLMFEILVCDRVERGTHFWLLVFMPLFFVSPVSVAACVWGFRHDRSLELEILCSVNILQFIFIALRLDRIIHWPWLVVFVPLWILMSFLCLVVLYYIVWSLLFLRSLDVVAEQRRTHVTMAISWITIVVPLLIFEVLLVHRLDDHNTFSYISIFIPLWLSLLTLMATTFRRKGGNHWWFGIRRDFCQFLLEVFPFLREYGNISYDLHHEDSEDAEDASVSEAPKIAPMFGKKARVVITQSPGKYVPPPPKLNIDMPD.

Transmembrane regions (helical) follow at residues 16 to 36 (LIYA…DGII), 41 to 61 (WAVF…ASVG), 81 to 101 (FKAM…EILV), 111 to 131 (FWLL…AACV), 168 to 188 (WLVV…VVLY), 211 to 231 (VTMA…EVLL), and 240 to 260 (TFSY…LMAT).

It belongs to the TMEM185 family.

The protein localises to the membrane. The protein is Transmembrane protein 185B (Tmem185b) of Mus musculus (Mouse).